Consider the following 570-residue polypeptide: 15-cis-phytoene desaturase, chloroplastic/chromoplastic (570 aa).

Residues 1-91 (MSIVGLVSVV…AQLSASFRSS (91 aa)) constitute a chloroplast and chromoplast transit peptide. Residues 104 to 120 (GAGLAGLSTAKYLADAG), Ala-108, 127 to 128 (ES), Lys-135, 152 to 153 (HI), and Tyr-158 each bind FAD. Arg-293 is a binding site for substrate. Asp-524 contacts FAD. Substrate is bound at residue Ala-532. Met-534 contributes to the FAD binding site.

The protein belongs to the carotenoid/retinoid oxidoreductase family. In terms of assembly, homotetramer. FAD is required as a cofactor. As to expression, expressed more strongly in flowers than in leaves.

The protein localises to the plastid. It localises to the chloroplast. It is found in the chromoplast. Its subcellular location is the membrane. It carries out the reaction 2 a plastoquinone + 15-cis-phytoene = 9,9',15-tri-cis-zeta-carotene + 2 a plastoquinol. The protein operates within carotenoid biosynthesis; lycopene biosynthesis. Its function is as follows. Converts phytoene into zeta-carotene via the intermediary of phytofluene by the symmetrical introduction of two double bonds at the C-11 and C-11' positions of phytoene with a concomitant isomerization of two neighboring double bonds at the C9 and C9' positions from trans to cis. This is 15-cis-phytoene desaturase, chloroplastic/chromoplastic (PDS1) from Narcissus pseudonarcissus (Daffodil).